Reading from the N-terminus, the 245-residue chain is tRNA1(Val) (adenine(37)-N6)-methyltransferase (245 aa).

It belongs to the methyltransferase superfamily. tRNA (adenine-N(6)-)-methyltransferase family.

It is found in the cytoplasm. The catalysed reaction is adenosine(37) in tRNA1(Val) + S-adenosyl-L-methionine = N(6)-methyladenosine(37) in tRNA1(Val) + S-adenosyl-L-homocysteine + H(+). Specifically methylates the adenine in position 37 of tRNA(1)(Val) (anticodon cmo5UAC). The polypeptide is tRNA1(Val) (adenine(37)-N6)-methyltransferase (Escherichia coli O7:K1 (strain IAI39 / ExPEC)).